Here is a 2835-residue protein sequence, read N- to C-terminus: Vanchrobactin synthetase VabF (2835 aa).

The interval 16–452 (EDQWPLIGTQ…IPPSEKQQIT (437 aa)) is condensation 1. The interval 473-880 (QQTVESKPNE…GRCDHQIKIR (408 aa)) is adenylation 1. A Carrier 1 domain is found at 988–1062 (APITQPEQLL…MMAGQMVPLQ (75 aa)). S1023 carries the post-translational modification O-(pantetheine 4'-phosphoryl)serine. 2 condensation regions span residues 1081-1499 (WFEE…KIQQ) and 1539-1961 (DVLP…EWDL). Positions 1992-2394 (QQQRSPHQLA…GRSDDQIKIR (403 aa)) are adenylation 2. The Carrier 2 domain occupies 2503 to 2578 (NAHPGLETQL…KLASLLLDDD (76 aa)). Position 2538 is an O-(pantetheine 4'-phosphoryl)serine (S2538). The tract at residues 2601–2821 (ALFCVNSASG…APENVRQIGE (221 aa)) is thioesterase.

This sequence belongs to the NRP synthetase family. The cofactor is pantetheine 4'-phosphate.

It carries out the reaction holo-[peptidyl-carrier protein] + L-arginine + ATP = L-arginyl-[peptidyl-carrier protein] + AMP + diphosphate. The enzyme catalyses holo-[peptidyl-carrier protein] + L-serine + ATP = L-seryl-[peptidyl-carrier protein] + AMP + diphosphate. It participates in siderophore biosynthesis. In terms of biological role, involved in the synthesis of the siderophore vanchrobactin. Probably adenylates L-arginine via its first adenylation domain and loads it onto its first peptidyl carrier domain via a thioester linkage to the phosphopanthetheine moiety. In addition, may adenylate L-serine via its second adenylation domain and loads it onto its second peptidyl carrier domain via a thioester linkage to the phosphopanthetheine moiety. The thioesterase domain may release vanchrobactin after condensation of the siderophore components. In Vibrio anguillarum (Listonella anguillarum), this protein is Vanchrobactin synthetase VabF.